The primary structure comprises 463 residues: Ribosomal protein uS12 methylthiotransferase RimO (463 aa).

Residues 15-130 enclose the MTTase N-terminal domain; it reads PKVGMVSLGC…VMQAVHSHLP (116 aa). [4Fe-4S] cluster is bound by residues cysteine 24, cysteine 60, cysteine 89, cysteine 161, cysteine 165, and cysteine 168. One can recognise a Radical SAM core domain in the interval 147-392; the sequence is LTPRHYAYLK…MEVAEEVSAA (246 aa). The TRAM domain maps to 395–463; the sequence is ARKIGKTLKV…ADSHDLWGEV (69 aa).

The protein belongs to the methylthiotransferase family. RimO subfamily. Requires [4Fe-4S] cluster as cofactor.

It is found in the cytoplasm. It carries out the reaction L-aspartate(89)-[ribosomal protein uS12]-hydrogen + (sulfur carrier)-SH + AH2 + 2 S-adenosyl-L-methionine = 3-methylsulfanyl-L-aspartate(89)-[ribosomal protein uS12]-hydrogen + (sulfur carrier)-H + 5'-deoxyadenosine + L-methionine + A + S-adenosyl-L-homocysteine + 2 H(+). Its function is as follows. Catalyzes the methylthiolation of an aspartic acid residue of ribosomal protein uS12. This Burkholderia pseudomallei (strain 668) protein is Ribosomal protein uS12 methylthiotransferase RimO.